We begin with the raw amino-acid sequence, 478 residues long: Probable serine carboxypeptidase CPVL (478 aa).

The N-terminal stretch at 1 to 22 (MVRAQWKVIILLILLMVIPSDG) is a signal peptide. Residues asparagine 83 and asparagine 134 are each glycosylated (N-linked (GlcNAc...) asparagine). Serine 206 is an active-site residue. N-linked (GlcNAc...) asparagine glycosylation is found at asparagine 309 and asparagine 350. Residues aspartate 390 and histidine 450 contribute to the active site.

It belongs to the peptidase S10 family.

May be involved in the digestion of phagocytosed particles in the lysosome, participation in an inflammatory protease cascade, and trimming of peptides for antigen presentation. The chain is Probable serine carboxypeptidase CPVL (CPVL) from Rattus norvegicus (Rat).